Consider the following 176-residue polypeptide: Small ribosomal subunit protein uS5 (176 aa).

Residues 11–74 (LSEVLVDVNR…QAAKKRMMKV (64 aa)) form the S5 DRBM domain.

The protein belongs to the universal ribosomal protein uS5 family. In terms of assembly, part of the 30S ribosomal subunit. Contacts proteins S4 and S8.

Its function is as follows. With S4 and S12 plays an important role in translational accuracy. In terms of biological role, located at the back of the 30S subunit body where it stabilizes the conformation of the head with respect to the body. This chain is Small ribosomal subunit protein uS5, found in Rickettsia peacockii (strain Rustic).